Consider the following 265-residue polypeptide: Iron(3+)-hydroxamate import ATP-binding protein FhuC (265 aa).

One can recognise an ABC transporter domain in the interval 12–248; that stretch reads FALRNISFRV…ETLEMIYGIP (237 aa). ATP-binding positions include 44 to 51 and 168 to 179; these read GHNGSGKS and CLLLDEPTSALD.

Belongs to the ABC transporter superfamily. Iron (Fe3+)-hydroxamate importer (TC 3.A.1.14.7) family. In terms of assembly, the complex is composed of two ATP-binding proteins (FhuC), a transmembrane protein (FhuB) and a solute-binding protein (FhuD). FhuC interacts with FhuB.

It localises to the cell inner membrane. It carries out the reaction ATP + H2O + Fe(3+)-hydroxamate complex-[hydroxamate-binding protein]Side 1 = ADP + phosphate + Fe(3+)-hydroxamate complexSide 2 + [hydroxamate-binding protein]Side 1.. ATPase activity is inhibited by vanadate. Functionally, part of the ABC transporter complex FhuCDB involved in iron(3+)-hydroxamate import. Responsible for energy coupling to the transport system. This Escherichia coli (strain K12) protein is Iron(3+)-hydroxamate import ATP-binding protein FhuC (fhuC).